A 337-amino-acid chain; its full sequence is Glyceraldehyde-3-phosphate dehydrogenase (337 aa).

Residues 12–13 (RI), aspartate 34, arginine 78, and threonine 121 each bind NAD(+). D-glyceraldehyde 3-phosphate-binding positions include 151-153 (SCT), threonine 182, arginine 199, 212-213 (SG), and arginine 235. The active-site Nucleophile is the cysteine 152. Asparagine 317 provides a ligand contact to NAD(+).

Belongs to the glyceraldehyde-3-phosphate dehydrogenase family. In terms of assembly, homotetramer.

Its subcellular location is the cytoplasm. It carries out the reaction D-glyceraldehyde 3-phosphate + phosphate + NAD(+) = (2R)-3-phospho-glyceroyl phosphate + NADH + H(+). The protein operates within carbohydrate degradation; glycolysis; pyruvate from D-glyceraldehyde 3-phosphate: step 1/5. Functionally, catalyzes the oxidative phosphorylation of glyceraldehyde 3-phosphate (G3P) to 1,3-bisphosphoglycerate (BPG) using the cofactor NAD. The first reaction step involves the formation of a hemiacetal intermediate between G3P and a cysteine residue, and this hemiacetal intermediate is then oxidized to a thioester, with concomitant reduction of NAD to NADH. The reduced NADH is then exchanged with the second NAD, and the thioester is attacked by a nucleophilic inorganic phosphate to produce BPG. The chain is Glyceraldehyde-3-phosphate dehydrogenase (gap) from Lactococcus lactis subsp. lactis (strain IL1403) (Streptococcus lactis).